The chain runs to 219 residues: Orotate phosphoribosyltransferase (219 aa).

Position 26 (Lys26) interacts with 5-phospho-alpha-D-ribose 1-diphosphate. Residue 34–35 (FF) participates in orotate binding. Residues 72–73 (YK), Arg102, Lys103, Lys106, His108, and 128–136 (DDVITAGTA) contribute to the 5-phospho-alpha-D-ribose 1-diphosphate site. Orotate is bound by residues Thr132 and Arg160.

Belongs to the purine/pyrimidine phosphoribosyltransferase family. PyrE subfamily. Homodimer.

The enzyme catalyses orotidine 5'-phosphate + diphosphate = orotate + 5-phospho-alpha-D-ribose 1-diphosphate. It functions in the pathway pyrimidine metabolism; UMP biosynthesis via de novo pathway; UMP from orotate: step 1/2. Catalyzes the transfer of a ribosyl phosphate group from 5-phosphoribose 1-diphosphate to orotate, leading to the formation of orotidine monophosphate (OMP). The polypeptide is Orotate phosphoribosyltransferase (URA5) (Yarrowia lipolytica (strain CLIB 122 / E 150) (Yeast)).